Here is a 224-residue protein sequence, read N- to C-terminus: Protein GrpE (224 aa).

Polar residues-rich tracts occupy residues 1-16 and 209-224; these read MSGDASTSAQDQNVES and ESSSDAASEQPQEGDA. Disordered stretches follow at residues 1–35 and 203–224; these read MSGDASTSAQDQNVESNDVPAIPDVDAGTPIDPVV and SMGPGPESSSDAASEQPQEGDA.

Belongs to the GrpE family. In terms of assembly, homodimer.

Its subcellular location is the cytoplasm. Functionally, participates actively in the response to hyperosmotic and heat shock by preventing the aggregation of stress-denatured proteins, in association with DnaK and GrpE. It is the nucleotide exchange factor for DnaK and may function as a thermosensor. Unfolded proteins bind initially to DnaJ; upon interaction with the DnaJ-bound protein, DnaK hydrolyzes its bound ATP, resulting in the formation of a stable complex. GrpE releases ADP from DnaK; ATP binding to DnaK triggers the release of the substrate protein, thus completing the reaction cycle. Several rounds of ATP-dependent interactions between DnaJ, DnaK and GrpE are required for fully efficient folding. The polypeptide is Protein GrpE (Synechococcus sp. (strain CC9902)).